We begin with the raw amino-acid sequence, 121 residues long: Large ribosomal subunit protein bL12 (121 aa).

Belongs to the bacterial ribosomal protein bL12 family. As to quaternary structure, homodimer. Part of the ribosomal stalk of the 50S ribosomal subunit. Forms a multimeric L10(L12)X complex, where L10 forms an elongated spine to which 2 to 4 L12 dimers bind in a sequential fashion. Binds GTP-bound translation factors.

Functionally, forms part of the ribosomal stalk which helps the ribosome interact with GTP-bound translation factors. Is thus essential for accurate translation. This chain is Large ribosomal subunit protein bL12, found in Pelagibacter ubique (strain HTCC1062).